Consider the following 170-residue polypeptide: Protein SprT (170 aa).

A SprT-like domain is found at 22 to 163 (LQQANLTLQT…RCRRCGKTLR (142 aa)). Position 78 (His78) interacts with Zn(2+). Glu79 is a catalytic residue. Residue His82 coordinates Zn(2+).

This sequence belongs to the SprT family. Requires Zn(2+) as cofactor.

The protein resides in the cytoplasm. This chain is Protein SprT, found in Pectobacterium carotovorum subsp. carotovorum (strain PC1).